Reading from the N-terminus, the 59-residue chain is MNNVKELSMTELQTITGGARSYGNGVYCNNKKCWVNRGEATQSIIGGMISGWASGLAGM.

A propeptide spanning residues 1–18 (MNNVKELSMTELQTITGG) is cleaved from the precursor. An intrachain disulfide couples C28 to C33.

This sequence belongs to the bacteriocin class IIA/YGNGV family.

The protein resides in the secreted. Its function is as follows. Bactericidal activity; inhibits closely related Lactobacilli, Listeria monocytogenes and ivanovvi, Enterococcus faecalis, Carnobacterium sp and Brocothrix thermosphacta. This is Bacteriocin curvacin-A (curA) from Latilactobacillus curvatus (Lactobacillus curvatus).